We begin with the raw amino-acid sequence, 78 residues long: Large ribosomal subunit protein bL28 (78 aa).

Residues 1–23 are disordered; it reads MSRVCQVSGKRVQTGNNVSHANN. A compositionally biased stretch (polar residues) spans 11–22; the sequence is RVQTGNNVSHAN.

This sequence belongs to the bacterial ribosomal protein bL28 family.

This chain is Large ribosomal subunit protein bL28, found in Xanthomonas campestris pv. campestris (strain 8004).